We begin with the raw amino-acid sequence, 421 residues long: ATP-dependent RNA helicase RhlB (421 aa).

Residues 9–37 (QKFSDFALHPKVVEALEKKGFHNCTPIQA) carry the Q motif motif. A Helicase ATP-binding domain is found at 40-219 (LPLTLAGRDV…FEQMNNAEYI (180 aa)). Residue 53 to 60 (AQTGTGKT) participates in ATP binding. Positions 165–168 (DEAD) match the DEAD box motif. In terms of domain architecture, Helicase C-terminal spans 245–390 (RLLQTLIEEE…VSKYNPDALM (146 aa)). The tract at residues 392–421 (DLPKPLRLTRPRTGNGPRRTGAPRNRRRSG) is disordered. Residues 402–414 (PRTGNGPRRTGAP) are compositionally biased toward low complexity.

This sequence belongs to the DEAD box helicase family. RhlB subfamily. As to quaternary structure, component of the RNA degradosome, which is a multiprotein complex involved in RNA processing and mRNA degradation.

It is found in the cytoplasm. The enzyme catalyses ATP + H2O = ADP + phosphate + H(+). Its function is as follows. DEAD-box RNA helicase involved in RNA degradation. Has RNA-dependent ATPase activity and unwinds double-stranded RNA. The sequence is that of ATP-dependent RNA helicase RhlB from Escherichia coli O139:H28 (strain E24377A / ETEC).